The chain runs to 874 residues: Alanine--tRNA ligase (874 aa).

Positions 562, 566, 665, and 669 each coordinate Zn(2+).

The protein belongs to the class-II aminoacyl-tRNA synthetase family. Zn(2+) is required as a cofactor.

Its subcellular location is the cytoplasm. The enzyme catalyses tRNA(Ala) + L-alanine + ATP = L-alanyl-tRNA(Ala) + AMP + diphosphate. Its function is as follows. Catalyzes the attachment of alanine to tRNA(Ala) in a two-step reaction: alanine is first activated by ATP to form Ala-AMP and then transferred to the acceptor end of tRNA(Ala). Also edits incorrectly charged Ser-tRNA(Ala) and Gly-tRNA(Ala) via its editing domain. This chain is Alanine--tRNA ligase, found in Pseudomonas fluorescens (strain ATCC BAA-477 / NRRL B-23932 / Pf-5).